The primary structure comprises 413 residues: Ras association domain-containing protein 5 (413 aa).

The interval 1-105 (MASPAIGQRP…RDVRSIFEQP (105 aa)) is disordered. The segment covering 61–74 (ARGDPEPTPRDCRH) has biased composition (basic and acidic residues). The Phorbol-ester/DAG-type zinc-finger motif lies at 117–165 (GHRFAELALRGGPGWCDLCGREVLRQALRCANCKFTCHPECRSLIQLDC). A phosphoserine mark is found at Ser-177 and Ser-274. In terms of domain architecture, Ras-associating spans 265 to 359 (PAATTDKRTS…LSFVLKENET (95 aa)). Thr-347 is modified (phosphothreonine). The 48-residue stretch at 361-408 (DVEWDAFSIPELQNFLTILEKEEQDKIHQLQKKYNKFRQKLEEALRES) folds into the SARAH domain.

In terms of assembly, interacts directly with activated HRAS; a RASSF5-STK4/MST1 complex probably associates with activated HRAS. Interacts with KRAS. Probably interacts with Ras-like GTPases RRAS, MRAS, RAP1B, RAP2A and RALA. Interacts with RRAS2. Can self-associate. Interacts with RSSF1 isoform A. The RSSF1 isoform A-RSSF5 heterodimer probably mediates the association of RSSF1 with HRAS. Isoform 2 interacts with activated RAP1A and ITGAL/LFA-1. Binds STK4/MST1, inhibiting STK4/MST1 autoactivation.

It localises to the cytoplasm. It is found in the cytoskeleton. Functionally, potential tumor suppressor. Seems to be involved in lymphocyte adhesion by linking RAP1A activation upon T-cell receptor or chemokine stimulation to integrin activation. Stimulates lymphocyte polarization and the patch-like distribution of ITGAL/LFA-1, resulting in an enhanced adhesion to ICAM1. Together with RAP1A may participate in regulation of microtubule growth. The association with activated RAP1A is required for directional movement of endothelial cells during wound healing. May be involved in regulation of Ras apoptotic function. The RASSF5-STK4/MST1 complex may mediate HRAS and KRAS induced apoptosis. In Rattus norvegicus (Rat), this protein is Ras association domain-containing protein 5 (Rassf5).